A 1143-amino-acid polypeptide reads, in one-letter code: Disease resistance protein Pikm1-TS (1143 aa).

The segment at 1 to 190 (MEAAAMAVTA…PLRIMGGEMQ (190 aa)) is structured coiled coil (CC) domain. One can recognise an HMA domain in the interval 189 to 258 (MQKIVFKIPM…KVGPAMFLEV (70 aa)). Positions 191–264 (KIVFKIPMVD…FLEVSQVKED (74 aa)) are HMA-like domain. The 289-residue stretch at 282-570 (HEVKTICILG…WIAEGFVSEE (289 aa)) folds into the NB-ARC domain. LRR repeat units follow at residues 681-706 (FKRL…ICEQ), 708-731 (SLRV…MRKL), 732-754 (KHLE…IGEL), 756-777 (HLRI…IREL), 778-800 (QHLH…VGKL), 802-823 (NLKI…IGEL), 824-848 (NHLQ…QISQ), 945-968 (MPNL…INGT), 979-1002 (DSRV…EFKF), and 1004-1027 (AGPA…VFRC).

It belongs to the disease resistance NB-LRR family. Interacts with AVR-Pik through its N-terminal part containing the HMA-like domain. As to expression, constitutively expressed.

Disease resistance (R) protein that specifically recognizes the AVR-Pik effector avirulence protein from M.oryzae. Resistance proteins guard the plant against pathogens that contain an appropriate avirulence protein via an indirect interaction with this avirulence protein. That triggers a defense system including the hypersensitive response, which restricts the pathogen growth. Contribution of Pikm-2 is required to recognize the effector avirulence protein AVR-Pik. The protein is Disease resistance protein Pikm1-TS of Oryza sativa subsp. japonica (Rice).